Consider the following 673-residue polypeptide: Ribonucleoprotein PTB-binding 2 (673 aa).

Over residues 1 to 17 (MAARGGGAGGAGSGSGP) the composition is skewed to gly residues. The disordered stretch occupies residues 1-34 (MAARGGGAGGAGSGSGPSAGTAGEAAEPALRPGE). Low complexity predominate over residues 18-29 (SAGTAGEAAEPA). RRM domains lie at 58–129 (RKIL…LQPT), 131–209 (ALLC…WMDV), and 220–298 (KCLC…FCAP). Positions 481–549 (QLPAGQAGPG…KGTEVASKNQ (69 aa)) are disordered. Residues 499–512 (SASVSISEASFSGS) are compositionally biased toward low complexity. The span at 529-549 (TGNQKTPQSQPKGTEVASKNQ) shows a compositional bias: polar residues.

Interacts with PTBP1 and RAVER1. Expressed throughout embryogenesis. Detected at low levels in adult lung, brain and kidney, but not in the other tissues tested.

It is found in the nucleus. The protein resides in the cytoplasm. Functionally, may bind single-stranded nucleic acids. In Mus musculus (Mouse), this protein is Ribonucleoprotein PTB-binding 2 (Raver2).